A 600-amino-acid polypeptide reads, in one-letter code: Aspartate--tRNA ligase (600 aa).

Glu175 contributes to the L-aspartate binding site. An aspartate region spans residues 199–202; the sequence is QLFK. An L-aspartate-binding site is contributed by Arg221. ATP contacts are provided by residues 221-223 and Gln230; that span reads RDE. His448 provides a ligand contact to L-aspartate. Glu484 contributes to the ATP binding site. Arg491 is an L-aspartate binding site. 536–539 provides a ligand contact to ATP; that stretch reads GLDR.

Belongs to the class-II aminoacyl-tRNA synthetase family. Type 1 subfamily. Homodimer.

The protein resides in the cytoplasm. It catalyses the reaction tRNA(Asp) + L-aspartate + ATP = L-aspartyl-tRNA(Asp) + AMP + diphosphate. In terms of biological role, catalyzes the attachment of L-aspartate to tRNA(Asp) in a two-step reaction: L-aspartate is first activated by ATP to form Asp-AMP and then transferred to the acceptor end of tRNA(Asp). In Limosilactobacillus reuteri (strain DSM 20016) (Lactobacillus reuteri), this protein is Aspartate--tRNA ligase.